The following is a 318-amino-acid chain: MASVQRKSWCALTIRLLGRTEIRRLAKELEFRPRKSLGQNFVHDANTVRRVVSTSGVSRSDHVLEVGPGLGSLTLALLDRGAHVTAVEIDPVLAERLPHTVAEHSHSEIQRLTVLNRDVLTLRRDELAEPPTAVVANLPYNVAVPALLHLLAEFPSIRTVTVMVQAEVAERLAAEPGGKEYGVPSVKVRFFGRVRRCGMVSPTVFWPIPRVYSGLVRIDRYPTSPWPTDPAFRRQVFQLVDIAFGQRRKTCRNAFVDWAGSGNESADRLLAASIDPARRGETLSIDDFVRLLQRSADRGGSDREGTSPPTAGQGAPAC.

Positions 40, 42, 67, 88, 118, and 137 each coordinate S-adenosyl-L-methionine. A compositionally biased stretch (basic and acidic residues) spans 296–305 (ADRGGSDREG). The interval 296-318 (ADRGGSDREGTSPPTAGQGAPAC) is disordered.

The protein belongs to the class I-like SAM-binding methyltransferase superfamily. rRNA adenine N(6)-methyltransferase family. RsmA subfamily.

Its subcellular location is the cytoplasm. The enzyme catalyses adenosine(1518)/adenosine(1519) in 16S rRNA + 4 S-adenosyl-L-methionine = N(6)-dimethyladenosine(1518)/N(6)-dimethyladenosine(1519) in 16S rRNA + 4 S-adenosyl-L-homocysteine + 4 H(+). Functionally, specifically dimethylates two adjacent adenosines (A1518 and A1519) in the loop of a conserved hairpin near the 3'-end of 16S rRNA in the 30S particle. May play a critical role in biogenesis of 30S subunits. This is Ribosomal RNA small subunit methyltransferase A from Mycobacterium avium (strain 104).